The chain runs to 327 residues: ATP-dependent 6-phosphofructokinase (327 aa).

Residues Gly11, 72-73, and 102-105 each bind ATP; these read RS and GDGS. Asp103 contributes to the Mg(2+) binding site. 127–129 is a binding site for substrate; sequence TID. Catalysis depends on Asp129, which acts as the Proton acceptor. Residue Arg156 coordinates ADP. Substrate contacts are provided by residues Arg164 and 171 to 173; that span reads MGR. An ADP-binding site is contributed by 187-189; the sequence is GAE. Substrate-binding positions include Glu224, Arg245, and 251–254; that span reads HIQR.

Belongs to the phosphofructokinase type A (PFKA) family. ATP-dependent PFK group I subfamily. Prokaryotic clade 'B1' sub-subfamily. As to quaternary structure, homotetramer. Mg(2+) serves as cofactor.

Its subcellular location is the cytoplasm. The enzyme catalyses beta-D-fructose 6-phosphate + ATP = beta-D-fructose 1,6-bisphosphate + ADP + H(+). The protein operates within carbohydrate degradation; glycolysis; D-glyceraldehyde 3-phosphate and glycerone phosphate from D-glucose: step 3/4. Allosterically activated by ADP and other diphosphonucleosides, and allosterically inhibited by phosphoenolpyruvate. In terms of biological role, catalyzes the phosphorylation of D-fructose 6-phosphate to fructose 1,6-bisphosphate by ATP, the first committing step of glycolysis. This Sulfurovum sp. (strain NBC37-1) protein is ATP-dependent 6-phosphofructokinase.